The chain runs to 354 residues: Protein-arginine kinase (354 aa).

One can recognise a Phosphagen kinase C-terminal domain in the interval 24–254 (IVLSSRIRLA…QQIIQQEKMA (231 aa)). ATP is bound by residues 27–31 (SSRIR), His92, Arg125, 176–180 (RASVM), and 207–212 (RGIYGE). An RDXXRA motif of the pArg binding pocket involved in allosteric regulation motif is present at residues 337–342 (RDYRRA).

It belongs to the ATP:guanido phosphotransferase family.

It catalyses the reaction L-arginyl-[protein] + ATP = N(omega)-phospho-L-arginyl-[protein] + ADP + H(+). Its activity is regulated as follows. Appears to be allosterically activated by the binding of pArg-containing polypeptides to the pArg-binding pocket localized in the C-terminal domain of McsB. Functionally, catalyzes the specific phosphorylation of arginine residues in a large number of proteins. Is part of the bacterial stress response system. Protein arginine phosphorylation has a physiologically important role and is involved in the regulation of many critical cellular processes, such as protein homeostasis, motility, competence, and stringent and stress responses, by regulating gene expression and protein activity. This chain is Protein-arginine kinase, found in Bacillus anthracis (strain A0248).